The primary structure comprises 262 residues: 5'-nucleotidase SurE (262 aa).

Asp-8, Asp-9, Ser-41, and Asn-97 together coordinate a divalent metal cation.

This sequence belongs to the SurE nucleotidase family. Requires a divalent metal cation as cofactor.

Its subcellular location is the cytoplasm. The catalysed reaction is a ribonucleoside 5'-phosphate + H2O = a ribonucleoside + phosphate. Nucleotidase that shows phosphatase activity on nucleoside 5'-monophosphates. The chain is 5'-nucleotidase SurE from Methanococcus maripaludis (strain DSM 14266 / JCM 13030 / NBRC 101832 / S2 / LL).